We begin with the raw amino-acid sequence, 335 residues long: MRN complex-interacting protein (335 aa).

Disordered regions lie at residues 75 to 102 (EEAVNGSEEENAGPLQAEAGSQQAPSKP) and 118 to 194 (QELD…ALST). At Ser-100 the chain carries Phosphoserine. Residues 129–142 (TQLSTSAERPSSPA) are compositionally biased toward polar residues. The Nuclear localization signal (NLS) motif lies at 145-148 (RKRK). A compositionally biased stretch (polar residues) spans 177–194 (STGLFGTEQQGTSPALST). The interval 203-230 (FPRWKLPSPVTQVNAPSSKWARFLLAPG) is necessary for the association with the MRN complex. The segment at 273 to 335 (RPPQAIHTTT…TTGEDFDDDL (63 aa)) is disordered. Positions 286–297 (DRPDRKTREQPR) are enriched in basic and acidic residues.

The protein belongs to the MRNIP family. Associates with the MRE11-RAD50-NBN (MRN) damage-sensing complex; this association is constitutive. Interacts with MRE11. Interacts with NBN. Interacts with RAD50. Phosphorylated; phosphorylation is constitutive and occurs in the absence of any DNA-damaging stimulus. Phosphorylation is necessary for its nuclear retention.

Its subcellular location is the nucleus. The protein localises to the nucleoplasm. In terms of biological role, plays a role in the cellular response to DNA damage and the maintenance of genome stability through its association with the MRN damage-sensing complex. Promotes chromatin loading and activity of the MRN complex to facilitate subsequent ATM-mediated DNA damage response signaling and DNA repair. This chain is MRN complex-interacting protein, found in Mus musculus (Mouse).